The chain runs to 360 residues: Phosphoserine aminotransferase (360 aa).

Arginine 42 contributes to the L-glutamate binding site. Residues 76–77, tryptophan 102, threonine 152, aspartate 172, and glutamine 195 each bind pyridoxal 5'-phosphate; that span reads AS. Lysine 196 carries the N6-(pyridoxal phosphate)lysine modification. 237–238 contributes to the pyridoxal 5'-phosphate binding site; it reads NT.

The protein belongs to the class-V pyridoxal-phosphate-dependent aminotransferase family. SerC subfamily. In terms of assembly, homodimer. The cofactor is pyridoxal 5'-phosphate.

It is found in the cytoplasm. It carries out the reaction O-phospho-L-serine + 2-oxoglutarate = 3-phosphooxypyruvate + L-glutamate. The enzyme catalyses 4-(phosphooxy)-L-threonine + 2-oxoglutarate = (R)-3-hydroxy-2-oxo-4-phosphooxybutanoate + L-glutamate. It participates in amino-acid biosynthesis; L-serine biosynthesis; L-serine from 3-phospho-D-glycerate: step 2/3. Functionally, catalyzes the reversible conversion of 3-phosphohydroxypyruvate to phosphoserine and of 3-hydroxy-2-oxo-4-phosphonooxybutanoate to phosphohydroxythreonine. This is Phosphoserine aminotransferase from Bacillus cereus (strain ATCC 14579 / DSM 31 / CCUG 7414 / JCM 2152 / NBRC 15305 / NCIMB 9373 / NCTC 2599 / NRRL B-3711).